The primary structure comprises 260 residues: Malonyl-[acyl-carrier protein] O-methyltransferase (260 aa).

It belongs to the methyltransferase superfamily.

It catalyses the reaction malonyl-[ACP] + S-adenosyl-L-methionine = malonyl-[ACP] methyl ester + S-adenosyl-L-homocysteine. Its pathway is cofactor biosynthesis; biotin biosynthesis. Functionally, converts the free carboxyl group of a malonyl-thioester to its methyl ester by transfer of a methyl group from S-adenosyl-L-methionine (SAM). It allows to synthesize pimeloyl-ACP via the fatty acid synthetic pathway. The protein is Malonyl-[acyl-carrier protein] O-methyltransferase of Herminiimonas arsenicoxydans.